The following is a 546-amino-acid chain: Chaperonin GroEL 4 (546 aa).

ATP is bound by residues 30 to 33 (TLGP), Lys51, 87 to 91 (DGTTT), Gly415, and Asp496.

This sequence belongs to the chaperonin (HSP60) family. In terms of assembly, forms a cylinder of 14 subunits composed of two heptameric rings stacked back-to-back. Interacts with the co-chaperonin GroES.

The protein resides in the cytoplasm. It carries out the reaction ATP + H2O + a folded polypeptide = ADP + phosphate + an unfolded polypeptide.. Its function is as follows. Together with its co-chaperonin GroES, plays an essential role in assisting protein folding. The GroEL-GroES system forms a nano-cage that allows encapsulation of the non-native substrate proteins and provides a physical environment optimized to promote and accelerate protein folding. In Bradyrhizobium sp. (strain BTAi1 / ATCC BAA-1182), this protein is Chaperonin GroEL 4.